The chain runs to 185 residues: Ribosome-recycling factor (185 aa).

Positions 136-159 (NEQLKSQQKDGKMSEDELKRSQDE) are disordered.

It belongs to the RRF family.

It is found in the cytoplasm. Responsible for the release of ribosomes from messenger RNA at the termination of protein biosynthesis. May increase the efficiency of translation by recycling ribosomes from one round of translation to another. This Pelotomaculum thermopropionicum (strain DSM 13744 / JCM 10971 / SI) protein is Ribosome-recycling factor.